Consider the following 205-residue polypeptide: Probable GTP-binding protein EngB (205 aa).

The 175-residue stretch at 27–201 (TGIEIAFAGR…AVKLDFWFSP (175 aa)) folds into the EngB-type G domain. GTP is bound by residues 35–42 (GRSNAGKS), 62–66 (GRTQL), 80–83 (DLPG), 147–150 (TKAD), and 180–182 (FSA). The Mg(2+) site is built by Ser-42 and Thr-64.

It belongs to the TRAFAC class TrmE-Era-EngA-EngB-Septin-like GTPase superfamily. EngB GTPase family. The cofactor is Mg(2+).

Functionally, necessary for normal cell division and for the maintenance of normal septation. The polypeptide is Probable GTP-binding protein EngB (Haemophilus influenzae (strain PittGG)).